The chain runs to 316 residues: Pantothenate kinase (316 aa).

95–102 (GSVSVGKS) is a binding site for ATP.

It belongs to the prokaryotic pantothenate kinase family.

It localises to the cytoplasm. It catalyses the reaction (R)-pantothenate + ATP = (R)-4'-phosphopantothenate + ADP + H(+). It participates in cofactor biosynthesis; coenzyme A biosynthesis; CoA from (R)-pantothenate: step 1/5. The polypeptide is Pantothenate kinase (Haemophilus ducreyi (strain 35000HP / ATCC 700724)).